The chain runs to 318 residues: NADH-ubiquinone oxidoreductase chain 1 (318 aa).

The next 8 helical transmembrane spans lie at 2–22, 69–89, 102–122, 147–167, 172–192, 231–251, 253–273, and 294–314; these read LLTN…FLTL, LMFI…WAPL, ILFI…SGWA, AIIL…TLTI, MWLI…TLAE, IILM…NPLF, ELHT…FLWI, and LPLT…LAGI.

Belongs to the complex I subunit 1 family.

The protein resides in the mitochondrion inner membrane. It catalyses the reaction a ubiquinone + NADH + 5 H(+)(in) = a ubiquinol + NAD(+) + 4 H(+)(out). Its function is as follows. Core subunit of the mitochondrial membrane respiratory chain NADH dehydrogenase (Complex I) that is believed to belong to the minimal assembly required for catalysis. Complex I functions in the transfer of electrons from NADH to the respiratory chain. The immediate electron acceptor for the enzyme is believed to be ubiquinone. This is NADH-ubiquinone oxidoreductase chain 1 (MT-ND1) from Bradypus variegatus (Brown-throated three-fingered sloth).